Consider the following 416-residue polypeptide: Proline-serine-threonine phosphatase-interacting protein 1 (416 aa).

Positions 5-264 (LQFKDAFWCR…TLEGCSIDAD (260 aa)) constitute an F-BAR domain. Positions 166–212 (HQKQVEKSQNKARQCKDSATEAERVYRQSIAQLEKVRAEWEQEHRTT) form a coiled coil. Ser-318 bears the Phosphoserine mark. Tyr-345 carries the phosphotyrosine modification. The region spanning 359–416 (SPAQEYRALYDYTAQNPDELDLSAGDILEVILEGEDGWWTVERNGQRGFVPGSYLEKL) is the SH3 domain.

As to quaternary structure, homodimer. Homotrimer. Interacts (via coiled-coil domain) with CD2AP, PTPN12 and PTPN18. Interacts (via SH3 domain) with ABL1 and WAS. Interacts (via SH3 and coiled-coil domains) with MEFV (via B-box zinc finger); the interaction allows binding of MEFV to PYCARD and facilitates formation of PYCARD pyroptosomes. Interacts with CD2, DNM2 and FASLG. Post-translationally, dephosphorylated on Tyr-345 by PTPN18, this event negatively regulates the association of PSTPIP1 with SH2 domain-containing proteins as tyrosine kinase. Phosphorylation of Tyr-345 is probably required for subsequent phosphorylation at other tyrosine residues. Phosphorylation is induced by activation of the EGFR and PDGFR in a ABL1 dependent manner. The phosphorylation regulates the interaction with WAS and with MEFV. Highly expressed in the peripheral blood leukocytes, granulocytes and monocytes, namely in T-cells and natural killer cells, and in spleen. Weakly expressed in the thymus, small intestine, lung and placenta.

The protein resides in the cytoplasm. It localises to the cell membrane. Its subcellular location is the cell projection. The protein localises to the uropodium. It is found in the cytoskeleton. The protein resides in the perinuclear region. It localises to the lamellipodium. Its subcellular location is the cleavage furrow. Functionally, involved in regulation of the actin cytoskeleton. May regulate WAS actin-bundling activity. Bridges the interaction between ABL1 and PTPN18 leading to ABL1 dephosphorylation. May play a role as a scaffold protein between PTPN12 and WAS and allow PTPN12 to dephosphorylate WAS. Has the potential to physically couple CD2 and CD2AP to WAS. Acts downstream of CD2 and CD2AP to recruit WAS to the T-cell:APC contact site so as to promote the actin polymerization required for synapse induction during T-cell activation. Down-regulates CD2-stimulated adhesion through the coupling of PTPN12 to CD2. Also has a role in innate immunity and the inflammatory response. Recruited to inflammasomes by MEFV. Induces formation of pyroptosomes, large supramolecular structures composed of oligomerized PYCARD dimers which form prior to inflammatory apoptosis. Binding to MEFV allows MEFV to bind to PYCARD and facilitates pyroptosome formation. Regulates endocytosis and cell migration in neutrophils. This Homo sapiens (Human) protein is Proline-serine-threonine phosphatase-interacting protein 1 (PSTPIP1).